A 275-amino-acid polypeptide reads, in one-letter code: 2,3,4,5-tetrahydropyridine-2,6-dicarboxylate N-succinyltransferase (275 aa).

Substrate is bound by residues arginine 106 and aspartate 143.

It belongs to the transferase hexapeptide repeat family. Homotrimer.

The protein localises to the cytoplasm. The enzyme catalyses (S)-2,3,4,5-tetrahydrodipicolinate + succinyl-CoA + H2O = (S)-2-succinylamino-6-oxoheptanedioate + CoA. Its pathway is amino-acid biosynthesis; L-lysine biosynthesis via DAP pathway; LL-2,6-diaminopimelate from (S)-tetrahydrodipicolinate (succinylase route): step 1/3. This chain is 2,3,4,5-tetrahydropyridine-2,6-dicarboxylate N-succinyltransferase, found in Cupriavidus pinatubonensis (strain JMP 134 / LMG 1197) (Cupriavidus necator (strain JMP 134)).